Reading from the N-terminus, the 202-residue chain is ATP-dependent Clp protease proteolytic subunit 2 (202 aa).

Ser-99 acts as the Nucleophile in catalysis. His-124 is a catalytic residue.

Belongs to the peptidase S14 family. As to quaternary structure, fourteen ClpP subunits assemble into 2 heptameric rings which stack back to back to give a disk-like structure with a central cavity, resembling the structure of eukaryotic proteasomes.

The protein localises to the cytoplasm. The catalysed reaction is Hydrolysis of proteins to small peptides in the presence of ATP and magnesium. alpha-casein is the usual test substrate. In the absence of ATP, only oligopeptides shorter than five residues are hydrolyzed (such as succinyl-Leu-Tyr-|-NHMec, and Leu-Tyr-Leu-|-Tyr-Trp, in which cleavage of the -Tyr-|-Leu- and -Tyr-|-Trp bonds also occurs).. In terms of biological role, cleaves peptides in various proteins in a process that requires ATP hydrolysis. Has a chymotrypsin-like activity. Plays a major role in the degradation of misfolded proteins. This chain is ATP-dependent Clp protease proteolytic subunit 2, found in Desulfitobacterium hafniense (strain Y51).